We begin with the raw amino-acid sequence, 202 residues long: Histone chaperone ASF1B (202 aa).

The interval 1 to 156 (MAKVSVLNVA…TRFHINWDNN (156 aa)) is interaction with histone H3 and CHAF1B. The residue at position 198 (Ser198) is a Phosphoserine; by TLK2.

The protein belongs to the ASF1 family. In terms of assembly, interacts with histone H3 (via C-terminus), including histone H3.1, H3.2 and H3.3, and histone H4; the interaction with H3 is direct. Interacts with the CHAF1A, CHAF1B and RBBP4 subunits of the CAF-1 complex. Interacts with HAT1, NASP and TAF1. Found in a soluble complex with NASP and histones H3 and H4; the interaction with NASP is probably indirect and mediated by H3-H4. Interacts with CDAN1. Found in a cytosolic complex with CDAN1, ASF1A, IPO4 and histones H3.1 and H4. Interacts with CREBBP. Post-translationally, phosphorylated by TLK1 and TLK2.

It localises to the nucleus. Its subcellular location is the cytoplasm. The protein resides in the cytosol. In terms of biological role, histone chaperone that facilitates histone deposition and histone exchange and removal during nucleosome assembly and disassembly. Cooperates with chromatin assembly factor 1 (CAF-1) to promote replication-dependent chromatin assembly. Also involved in the nuclear import of the histone H3-H4 dimer together with importin-4 (IPO4): specifically recognizes and binds newly synthesized histones with the monomethylation of H3 'Lys-9' (H3K9me1) and diacetylation at 'Lys-5' and 'Lys-12' of H4 (H4K5ac and H4K12ac) marks in the cytosol. Does not participate in replication-independent nucleosome deposition which is mediated by ASF1A and HIRA. Required for gonad development. The chain is Histone chaperone ASF1B (ASF1B) from Bos taurus (Bovine).